Consider the following 348-residue polypeptide: Methylthioribose-1-phosphate isomerase (348 aa).

Residues 47–49, R90, and Q196 each bind substrate; that span reads RGA. D237 functions as the Proton donor in the catalytic mechanism. 247-248 is a substrate binding site; that stretch reads NK.

The protein belongs to the eIF-2B alpha/beta/delta subunits family. MtnA subfamily.

It carries out the reaction 5-(methylsulfanyl)-alpha-D-ribose 1-phosphate = 5-(methylsulfanyl)-D-ribulose 1-phosphate. Its pathway is amino-acid biosynthesis; L-methionine biosynthesis via salvage pathway; L-methionine from S-methyl-5-thio-alpha-D-ribose 1-phosphate: step 1/6. Its function is as follows. Catalyzes the interconversion of methylthioribose-1-phosphate (MTR-1-P) into methylthioribulose-1-phosphate (MTRu-1-P). The sequence is that of Methylthioribose-1-phosphate isomerase from Synechococcus sp. (strain ATCC 27144 / PCC 6301 / SAUG 1402/1) (Anacystis nidulans).